The following is a 98-amino-acid chain: NADH-ubiquinone oxidoreductase chain 4L (98 aa).

The next 3 membrane-spanning stretches (helical) occupy residues 1 to 21 (MSMVYFNILMAFIVSFVGLLM), 29 to 49 (SLLCLEGMMLSLFVMMSVTIL), and 61 to 81 (IILLVFAACEAALGLSLLVMV).

The protein belongs to the complex I subunit 4L family. As to quaternary structure, core subunit of respiratory chain NADH dehydrogenase (Complex I) which is composed of 45 different subunits.

Its subcellular location is the mitochondrion inner membrane. The catalysed reaction is a ubiquinone + NADH + 5 H(+)(in) = a ubiquinol + NAD(+) + 4 H(+)(out). Core subunit of the mitochondrial membrane respiratory chain NADH dehydrogenase (Complex I) which catalyzes electron transfer from NADH through the respiratory chain, using ubiquinone as an electron acceptor. Part of the enzyme membrane arm which is embedded in the lipid bilayer and involved in proton translocation. In Eumetopias jubatus (Steller sea lion), this protein is NADH-ubiquinone oxidoreductase chain 4L (MT-ND4L).